The sequence spans 521 residues: uncharacterized protein (521 aa).

A disordered region spans residues 1-25; it reads MLQRSLGVNGRKLAMSARSAKRERK. 6 helical membrane-spanning segments follow: residues 68–88, 114–134, 160–180, 192–212, 290–310, and 399–419; these read GAVWVLPTFGVAIGLGSGAVL, VLIVVSATMITTIGIVFSLTV, VVLAIFACTFAYSTGGLHTVG, VAVTGSLALAFVSIAALIYFL, ALLVTFVGDYVTAGGLLGWCW, and LLFWLPYPSFATYLHVGCAQI.

Its subcellular location is the cell membrane. This is an uncharacterized protein from Mycobacterium bovis (strain ATCC BAA-935 / AF2122/97).